Here is a 953-residue protein sequence, read N- to C-terminus: Isoleucine--tRNA ligase (953 aa).

Positions 58–68 (PYANGFIHLGH) match the 'HIGH' region motif. Glu573 lines the L-isoleucyl-5'-AMP pocket. A 'KMSKS' region motif is present at residues 614-618 (KMSKS). Lys617 provides a ligand contact to ATP. Positions 916, 919, 936, and 939 each coordinate Zn(2+).

Belongs to the class-I aminoacyl-tRNA synthetase family. IleS type 1 subfamily. As to quaternary structure, monomer. Zn(2+) serves as cofactor.

Its subcellular location is the cytoplasm. It carries out the reaction tRNA(Ile) + L-isoleucine + ATP = L-isoleucyl-tRNA(Ile) + AMP + diphosphate. Its function is as follows. Catalyzes the attachment of isoleucine to tRNA(Ile). As IleRS can inadvertently accommodate and process structurally similar amino acids such as valine, to avoid such errors it has two additional distinct tRNA(Ile)-dependent editing activities. One activity is designated as 'pretransfer' editing and involves the hydrolysis of activated Val-AMP. The other activity is designated 'posttransfer' editing and involves deacylation of mischarged Val-tRNA(Ile). The chain is Isoleucine--tRNA ligase from Blochmanniella floridana.